We begin with the raw amino-acid sequence, 303 residues long: Methionyl-tRNA formyltransferase (303 aa).

108-111 (SDLP) provides a ligand contact to (6S)-5,6,7,8-tetrahydrofolate.

The protein belongs to the Fmt family.

The catalysed reaction is L-methionyl-tRNA(fMet) + (6R)-10-formyltetrahydrofolate = N-formyl-L-methionyl-tRNA(fMet) + (6S)-5,6,7,8-tetrahydrofolate + H(+). In terms of biological role, attaches a formyl group to the free amino group of methionyl-tRNA(fMet). The formyl group appears to play a dual role in the initiator identity of N-formylmethionyl-tRNA by promoting its recognition by IF2 and preventing the misappropriation of this tRNA by the elongation apparatus. The protein is Methionyl-tRNA formyltransferase of Rickettsia felis (strain ATCC VR-1525 / URRWXCal2) (Rickettsia azadi).